A 78-amino-acid polypeptide reads, in one-letter code: Beta sliding clamp (78 aa).

This sequence belongs to the beta sliding clamp family. Forms a ring-shaped head-to-tail homodimer around DNA which binds and tethers DNA polymerases and other proteins to the DNA. The DNA replisome complex has a single clamp-loading complex (3 tau and 1 each of delta, delta', psi and chi subunits) which binds 3 Pol III cores (1 core on the leading strand and 2 on the lagging strand) each with a beta sliding clamp dimer. Additional proteins in the replisome are other copies of gamma, psi and chi, Ssb, DNA helicase and RNA primase.

Its subcellular location is the cytoplasm. Confers DNA tethering and processivity to DNA polymerases and other proteins. Acts as a clamp, forming a ring around DNA (a reaction catalyzed by the clamp-loading complex) which diffuses in an ATP-independent manner freely and bidirectionally along dsDNA. Initially characterized for its ability to contact the catalytic subunit of DNA polymerase III (Pol III), a complex, multichain enzyme responsible for most of the replicative synthesis in bacteria; Pol III exhibits 3'-5' exonuclease proofreading activity. The beta chain is required for initiation of replication as well as for processivity of DNA replication. The polypeptide is Beta sliding clamp (dnaN) (Serratia marcescens).